Reading from the N-terminus, the 403-residue chain is S-adenosylmethionine synthase (403 aa).

Residue histidine 15 coordinates ATP. Residue aspartate 17 coordinates Mg(2+). Position 43 (glutamate 43) interacts with K(+). L-methionine is bound by residues glutamate 56 and glutamine 99. Residues 99 to 109 are flexible loop; sequence QSPDINQGVDR. ATP contacts are provided by residues 166-168, 232-233, aspartate 241, 247-248, alanine 264, and lysine 268; these read DAK, KF, and RK. Residue aspartate 241 coordinates L-methionine. Lysine 272 contacts L-methionine.

Belongs to the AdoMet synthase family. As to quaternary structure, homotetramer; dimer of dimers. It depends on Mg(2+) as a cofactor. K(+) serves as cofactor.

Its subcellular location is the cytoplasm. The catalysed reaction is L-methionine + ATP + H2O = S-adenosyl-L-methionine + phosphate + diphosphate. The protein operates within amino-acid biosynthesis; S-adenosyl-L-methionine biosynthesis; S-adenosyl-L-methionine from L-methionine: step 1/1. Catalyzes the formation of S-adenosylmethionine (AdoMet) from methionine and ATP. The overall synthetic reaction is composed of two sequential steps, AdoMet formation and the subsequent tripolyphosphate hydrolysis which occurs prior to release of AdoMet from the enzyme. This Xylella fastidiosa (strain M12) protein is S-adenosylmethionine synthase.